The chain runs to 622 residues: Phosphomethylpyrimidine synthase (622 aa).

Positions 109–130 (EPISNNNNDRQSSDKQLSFTTN) are disordered. Residues N234, M263, Y292, H328, 348–350 (SRG), 389–392 (DGLR), and E428 contribute to the substrate site. H432 lines the Zn(2+) pocket. Position 455 (Y455) interacts with substrate. H496 lines the Zn(2+) pocket. Positions 576, 579, and 584 each coordinate [4Fe-4S] cluster.

It belongs to the ThiC family. As to quaternary structure, homodimer. Requires [4Fe-4S] cluster as cofactor.

It catalyses the reaction 5-amino-1-(5-phospho-beta-D-ribosyl)imidazole + S-adenosyl-L-methionine = 4-amino-2-methyl-5-(phosphooxymethyl)pyrimidine + CO + 5'-deoxyadenosine + formate + L-methionine + 3 H(+). Its pathway is cofactor biosynthesis; thiamine diphosphate biosynthesis. Functionally, catalyzes the synthesis of the hydroxymethylpyrimidine phosphate (HMP-P) moiety of thiamine from aminoimidazole ribotide (AIR) in a radical S-adenosyl-L-methionine (SAM)-dependent reaction. The protein is Phosphomethylpyrimidine synthase of Baumannia cicadellinicola subsp. Homalodisca coagulata.